Consider the following 188-residue polypeptide: Elongation factor P (188 aa).

Belongs to the elongation factor P family.

Its subcellular location is the cytoplasm. It participates in protein biosynthesis; polypeptide chain elongation. Functionally, involved in peptide bond synthesis. Stimulates efficient translation and peptide-bond synthesis on native or reconstituted 70S ribosomes in vitro. Probably functions indirectly by altering the affinity of the ribosome for aminoacyl-tRNA, thus increasing their reactivity as acceptors for peptidyl transferase. This Rhodopseudomonas palustris (strain BisB5) protein is Elongation factor P.